The primary structure comprises 261 residues: Hemin import ATP-binding protein HmuV (261 aa).

The region spanning 3–243 (LQAQDLSVDR…ANLRRVYGVE (241 aa)) is the ABC transporter domain. Position 35-42 (35-42 (GANGAGKS)) interacts with ATP.

This sequence belongs to the ABC transporter superfamily. Heme (hemin) importer (TC 3.A.1.14.5) family. In terms of assembly, the complex is composed of two ATP-binding proteins (HmuV), two transmembrane proteins (HmuU) and a solute-binding protein (HmuT).

Its subcellular location is the cell inner membrane. Part of the ABC transporter complex HmuTUV involved in hemin import. Responsible for energy coupling to the transport system. The sequence is that of Hemin import ATP-binding protein HmuV from Bordetella avium (strain 197N).